Consider the following 424-residue polypeptide: Acetyl-CoA acetyltransferase, mitochondrial (424 aa).

Residues 1–30 (MAALVALHGVVRRPLLRGLLQEVRCLERSY) constitute a mitochondrion transit peptide. Position 63 is an N6-acetyllysine; alternate (Lys-63). The residue at position 63 (Lys-63) is an N6-succinyllysine; alternate. Position 75 is an N6-succinyllysine (Lys-75). Cys-123 serves as the catalytic Acyl-thioester intermediate. An N6-acetyllysine; alternate mark is found at Lys-171, Lys-178, Lys-187, and Lys-199. Residues Lys-171, Lys-178, Lys-187, and Lys-199 each carry the N6-succinyllysine; alternate modification. Ser-204 is modified (phosphoserine). Tyr-216 is a CoA binding site. Position 216 (Tyr-216) interacts with K(+). An N6-acetyllysine; alternate mark is found at Lys-220 and Lys-227. Lys-220 and Lys-227 each carry N6-succinyllysine; alternate. Lys-240 carries the N6-succinyllysine modification. An N6-acetyllysine; alternate modification is found at Lys-242. At Lys-242 the chain carries N6-succinyllysine; alternate. An N6-acetyllysine mark is found at Lys-248 and Lys-254. CoA-binding positions include 255–257 (RVD) and Lys-260. Lys-260 is modified (N6-acetyllysine; alternate). Lys-260 bears the N6-succinyllysine; alternate mark. N6-succinyllysine is present on residues Lys-263 and Lys-265. At Lys-270 the chain carries N6-acetyllysine. Ala-277, Ala-278, and Ala-280 together coordinate K(+). Ser-281 contributes to the CoA binding site. The residue at position 335 (Lys-335) is an N6-acetyllysine. K(+) is bound at residue Val-378. The active-site Proton donor/acceptor is Cys-410.

Belongs to the thiolase-like superfamily. Thiolase family. Homotetramer. Succinylation at Lys-265, adjacent to a coenzyme A binding site. Desuccinylated by SIRT5.

Its subcellular location is the mitochondrion. The enzyme catalyses 2 acetyl-CoA = acetoacetyl-CoA + CoA. The catalysed reaction is propanoyl-CoA + acetyl-CoA = 2-methyl-3-oxobutanoyl-CoA + CoA. It participates in lipid metabolism; fatty acid beta-oxidation. Its activity is regulated as follows. Activated by potassium ions, but not sodium ions. In terms of biological role, this is one of the enzymes that catalyzes the last step of the mitochondrial beta-oxidation pathway, an aerobic process breaking down fatty acids into acetyl-CoA. Using free coenzyme A/CoA, catalyzes the thiolytic cleavage of medium- to long-chain 3-oxoacyl-CoAs into acetyl-CoA and a fatty acyl-CoA shortened by two carbon atoms. The activity of the enzyme is reversible and it can also catalyze the condensation of two acetyl-CoA molecules into acetoacetyl-CoA. Thereby, it plays a major role in ketone body metabolism. The sequence is that of Acetyl-CoA acetyltransferase, mitochondrial (Acat1) from Mus musculus (Mouse).